The primary structure comprises 137 residues: MAKETTPDHPATELNEIQRYVTQERGTEAPYSGKLLHNKREGVYHCLCCNQPLFYSDSKYDSGCGWPSFYQPVSDDAIRYLDDNTHNMHRVEIRCGHCDAHLGHVFPDGPQPTGERFCVNSASLSFTDGENGDKTAG.

The region spanning 7–129 (PDHPATELNE…NSASLSFTDG (123 aa)) is the MsrB domain. Zn(2+)-binding residues include C46, C49, C95, and C98. C118 acts as the Nucleophile in catalysis.

It belongs to the MsrB Met sulfoxide reductase family. Requires Zn(2+) as cofactor.

It catalyses the reaction L-methionyl-[protein] + [thioredoxin]-disulfide + H2O = L-methionyl-(R)-S-oxide-[protein] + [thioredoxin]-dithiol. The chain is Peptide methionine sulfoxide reductase MsrB from Serratia proteamaculans (strain 568).